The chain runs to 207 residues: Small ribosomal subunit protein uS4c (207 aa).

The 64-residue stretch at 92–155 (MRLDNILFRL…TYQSILSKRI (64 aa)) folds into the S4 RNA-binding domain.

The protein belongs to the universal ribosomal protein uS4 family. In terms of assembly, part of the 30S ribosomal subunit. Contacts protein S5. The interaction surface between S4 and S5 is involved in control of translational fidelity.

The protein resides in the plastid. Its subcellular location is the chloroplast. Functionally, one of the primary rRNA binding proteins, it binds directly to 16S rRNA where it nucleates assembly of the body of the 30S subunit. With S5 and S12 plays an important role in translational accuracy. This is Small ribosomal subunit protein uS4c (rps4) from Equisetum giganteum (Giant horsetail).